The sequence spans 339 residues: Malate dehydrogenase 3, cytoplasmic (339 aa).

NAD(+) contacts are provided by residues 22-23, aspartate 49, and glycine 96; that span reads NI. Arginine 105 lines the oxaloacetate pocket. NAD(+) contacts are provided by glutamine 119 and asparagine 138. Oxaloacetate-binding residues include asparagine 138, arginine 169, histidine 194, and serine 249. Residue histidine 194 is the Proton acceptor of the active site.

The protein belongs to the LDH/MDH superfamily. MDH type 2 family. Expressed in rosette leaves at low levels.

It localises to the cytoplasm. It carries out the reaction (S)-malate + NAD(+) = oxaloacetate + NADH + H(+). Catalyzes a reversible NAD-dependent dehydrogenase reaction involved in central metabolism and redox homeostasis between organelle compartments. The protein is Malate dehydrogenase 3, cytoplasmic of Arabidopsis thaliana (Mouse-ear cress).